The chain runs to 233 residues: Putative N-acetylmannosamine-6-phosphate 2-epimerase (233 aa).

This sequence belongs to the NanE family.

It carries out the reaction an N-acyl-D-glucosamine 6-phosphate = an N-acyl-D-mannosamine 6-phosphate. It participates in amino-sugar metabolism; N-acetylneuraminate degradation; D-fructose 6-phosphate from N-acetylneuraminate: step 3/5. Functionally, converts N-acetylmannosamine-6-phosphate (ManNAc-6-P) to N-acetylglucosamine-6-phosphate (GlcNAc-6-P). The sequence is that of Putative N-acetylmannosamine-6-phosphate 2-epimerase from Yersinia pseudotuberculosis serotype O:1b (strain IP 31758).